The following is a 378-amino-acid chain: 3-dehydroquinate synthase (378 aa).

NAD(+) contacts are provided by residues Gly115–Asp119, Thr139–Ser140, Lys152, and Lys161. The Zn(2+) site is built by Glu194, His256, and His275.

Belongs to the sugar phosphate cyclases superfamily. Dehydroquinate synthase family. It depends on Co(2+) as a cofactor. Requires Zn(2+) as cofactor. NAD(+) is required as a cofactor.

The protein resides in the cytoplasm. The catalysed reaction is 7-phospho-2-dehydro-3-deoxy-D-arabino-heptonate = 3-dehydroquinate + phosphate. It functions in the pathway metabolic intermediate biosynthesis; chorismate biosynthesis; chorismate from D-erythrose 4-phosphate and phosphoenolpyruvate: step 2/7. Functionally, catalyzes the conversion of 3-deoxy-D-arabino-heptulosonate 7-phosphate (DAHP) to dehydroquinate (DHQ). The protein is 3-dehydroquinate synthase of Brucella canis (strain ATCC 23365 / NCTC 10854 / RM-666).